The sequence spans 590 residues: Aspartate--tRNA ligase (590 aa).

E172 is a binding site for L-aspartate. The segment at 196–199 is aspartate; that stretch reads QLFK. R218 is a binding site for L-aspartate. Residues 218–220 and Q227 each bind ATP; that span reads RDE. Position 449 (H449) interacts with L-aspartate. E483 serves as a coordination point for ATP. R490 lines the L-aspartate pocket. 535–538 is an ATP binding site; that stretch reads GLDR.

It belongs to the class-II aminoacyl-tRNA synthetase family. Type 1 subfamily. In terms of assembly, homodimer.

The protein resides in the cytoplasm. It carries out the reaction tRNA(Asp) + L-aspartate + ATP = L-aspartyl-tRNA(Asp) + AMP + diphosphate. Functionally, catalyzes the attachment of L-aspartate to tRNA(Asp) in a two-step reaction: L-aspartate is first activated by ATP to form Asp-AMP and then transferred to the acceptor end of tRNA(Asp). In Glaesserella parasuis serovar 5 (strain SH0165) (Haemophilus parasuis), this protein is Aspartate--tRNA ligase.